A 271-amino-acid chain; its full sequence is Catechol O-methyltransferase (271 aa).

Residues M1–P6 lie on the Cytoplasmic side of the membrane. The chain crosses the membrane as a helical; Signal-anchor for type II membrane protein span at residues L7 to L26. The Extracellular portion of the chain corresponds to R27–P271. S-adenosyl-L-methionine is bound by residues V92, E114, S122, E140, I141, G167–Q170, S169, and D191. Residue D191 participates in Mg(2+) binding. Residue K194 coordinates substrate. 2 residues coordinate Mg(2+): D219 and N220. 2 residues coordinate substrate: N220 and E249. The residue at position 267 (S267) is a Phosphoserine.

The protein belongs to the class I-like SAM-binding methyltransferase superfamily. Cation-dependent O-methyltransferase family. Requires Mg(2+) as cofactor. In terms of processing, the N-terminus is blocked. In terms of tissue distribution, brain, liver, placenta, lymphocytes and erythrocytes.

The protein localises to the cytoplasm. It localises to the cell membrane. The enzyme catalyses a catechol + S-adenosyl-L-methionine = a guaiacol + S-adenosyl-L-homocysteine + H(+). The catalysed reaction is 2-hydroxyestrone + S-adenosyl-L-methionine = 2-hydroxy-3-methoxy-estrone + S-adenosyl-L-homocysteine + H(+). It catalyses the reaction 4-hydroxyestrone + S-adenosyl-L-methionine = 4-methoxyestrone + S-adenosyl-L-homocysteine + H(+). It carries out the reaction 2-hydroxyestrone + S-adenosyl-L-methionine = 2-methoxyestrone + S-adenosyl-L-homocysteine + H(+). The enzyme catalyses 4-hydroxy-17beta-estradiol + S-adenosyl-L-methionine = 4-methoxy-17beta-estradiol + S-adenosyl-L-homocysteine + H(+). The catalysed reaction is 2-hydroxy-17beta-estradiol + S-adenosyl-L-methionine = 2-hydroxy-3-methoxy-17beta-estradiol + S-adenosyl-L-homocysteine + H(+). It catalyses the reaction 2-hydroxy-17beta-estradiol + S-adenosyl-L-methionine = 2-methoxy-17beta-estradiol + S-adenosyl-L-homocysteine + H(+). Functionally, catalyzes the O-methylation, and thereby the inactivation, of catecholamine neurotransmitters and catechol hormones. Also shortens the biological half-lives of certain neuroactive drugs, like L-DOPA, alpha-methyl DOPA and isoproterenol. In Homo sapiens (Human), this protein is Catechol O-methyltransferase.